Consider the following 181-residue polypeptide: Inner membrane-spanning protein YciB (181 aa).

The next 5 helical transmembrane spans lie at 22–42, 50–70, 72–92, 118–138, and 148–168; these read IYTA…ILYF, MHLV…AFHD, AFIK…LAVS, VTWY…YVAF, and FKVF…VFYI.

This sequence belongs to the YciB family.

It is found in the cell inner membrane. Its function is as follows. Plays a role in cell envelope biogenesis, maintenance of cell envelope integrity and membrane homeostasis. The polypeptide is Inner membrane-spanning protein YciB (Shewanella denitrificans (strain OS217 / ATCC BAA-1090 / DSM 15013)).